The primary structure comprises 219 residues: Small ribosomal subunit protein uS3c (219 aa).

The KH type-2 domain occupies 43 to 120; the sequence is IQNYIQKNMQ…KINITITKIT (78 aa).

This sequence belongs to the universal ribosomal protein uS3 family. As to quaternary structure, part of the 30S ribosomal subunit.

It is found in the plastid. The protein localises to the chloroplast. This Oenothera elata subsp. hookeri (Hooker's evening primrose) protein is Small ribosomal subunit protein uS3c (rps3).